Consider the following 240-residue polypeptide: 7-cyano-7-deazaguanine synthase (240 aa).

Residue 18–28 (FSGGQDSTTCL) participates in ATP binding. Cys197, Cys206, Cys209, and Cys212 together coordinate Zn(2+).

This sequence belongs to the QueC family. Zn(2+) is required as a cofactor.

It carries out the reaction 7-carboxy-7-deazaguanine + NH4(+) + ATP = 7-cyano-7-deazaguanine + ADP + phosphate + H2O + H(+). It functions in the pathway purine metabolism; 7-cyano-7-deazaguanine biosynthesis. Functionally, catalyzes the ATP-dependent conversion of 7-carboxy-7-deazaguanine (CDG) to 7-cyano-7-deazaguanine (preQ(0)). This is 7-cyano-7-deazaguanine synthase from Shewanella baltica (strain OS223).